The following is a 240-amino-acid chain: Probable metal transport system ATP-binding protein TM_0124 (240 aa).

Residues 4-223 (VEVKNLTYRI…LKKIFTDFDI (220 aa)) form the ABC transporter domain. ATP is bound at residue 36 to 43 (GPNGAGKT).

This sequence belongs to the ABC transporter superfamily.

Its function is as follows. Part of an ATP-driven transport system TM_0123/TM_0124/TM_0125 for a metal. Probably responsible for energy coupling to the transport system. The chain is Probable metal transport system ATP-binding protein TM_0124 from Thermotoga maritima (strain ATCC 43589 / DSM 3109 / JCM 10099 / NBRC 100826 / MSB8).